Consider the following 160-residue polypeptide: Thy-1 membrane glycoprotein (160 aa).

The first 19 residues, 1–19, serve as a signal peptide directing secretion; sequence MNPTVSIAVILTVLQAAHC. The residue at position 20 (glutamine 20) is a Pyrrolidone carboxylic acid. The 101-residue stretch at 20-120 folds into the Ig-like V-type domain; sequence QMIRDLSACL…YTGNQIKNIT (101 aa). Disulfide bonds link cysteine 28–cysteine 129 and cysteine 38–cysteine 103. 3 N-linked (GlcNAc...) asparagine glycosylation sites follow: asparagine 42, asparagine 78, and asparagine 118. Cysteine 129 is lipidated: GPI-anchor amidated cysteine. A propeptide spans 130 to 160 (removed in mature form); that stretch reads VRLSLLIQNTSWLLLLLLSLPLLQAVDFVSL. Asparagine 138 carries an N-linked (GlcNAc...) asparagine glycan.

In terms of processing, the N-terminus is blocked. As to expression, forebrain, cerebellum and tectum.

It is found in the cell membrane. Functionally, may play a role in cell-cell or cell-ligand interactions during synaptogenesis and other events in the brain. This Gallus gallus (Chicken) protein is Thy-1 membrane glycoprotein (THY1).